The chain runs to 556 residues: 2-succinyl-5-enolpyruvyl-6-hydroxy-3-cyclohexene-1-carboxylate synthase (556 aa).

The protein belongs to the TPP enzyme family. MenD subfamily. As to quaternary structure, homodimer. It depends on Mg(2+) as a cofactor. The cofactor is Mn(2+). Thiamine diphosphate is required as a cofactor.

It carries out the reaction isochorismate + 2-oxoglutarate + H(+) = 5-enolpyruvoyl-6-hydroxy-2-succinyl-cyclohex-3-ene-1-carboxylate + CO2. The protein operates within quinol/quinone metabolism; 1,4-dihydroxy-2-naphthoate biosynthesis; 1,4-dihydroxy-2-naphthoate from chorismate: step 2/7. It functions in the pathway quinol/quinone metabolism; menaquinone biosynthesis. Its function is as follows. Catalyzes the thiamine diphosphate-dependent decarboxylation of 2-oxoglutarate and the subsequent addition of the resulting succinic semialdehyde-thiamine pyrophosphate anion to isochorismate to yield 2-succinyl-5-enolpyruvyl-6-hydroxy-3-cyclohexene-1-carboxylate (SEPHCHC). The sequence is that of 2-succinyl-5-enolpyruvyl-6-hydroxy-3-cyclohexene-1-carboxylate synthase from Escherichia coli (strain 55989 / EAEC).